Reading from the N-terminus, the 506-residue chain is Radiation-sensitive protein 28 (506 aa).

WD repeat units follow at residues 55 to 94 (PLSI…HRND), 193 to 233 (HHKY…AVQD), 285 to 325 (RMQS…RLYS), 357 to 396 (AHLR…LQPE), and 404 to 451 (LGTQ…LWNK).

The protein localises to the nucleus. In terms of biological role, involved in transcription-coupled repair nucleotide excision repair (NER) of UV-induced DNA lesions. The sequence is that of Radiation-sensitive protein 28 (RAD28) from Saccharomyces cerevisiae (strain ATCC 204508 / S288c) (Baker's yeast).